Consider the following 349-residue polypeptide: Arginine kinase (349 aa).

One can recognise a Phosphagen kinase N-terminal domain in the interval Asp3 to Lys85. Gly58 to Tyr62 lines the substrate pocket. A Phosphagen kinase C-terminal domain is found at Trp113–Ala349. Residues Ser116 to Arg120 and His179 contribute to the ATP site. Glu219 is a substrate binding site. Arg223 lines the ATP pocket. A substrate-binding site is contributed by Cys265. Residues Arg274–His278 and Arg302–Glu307 each bind ATP. Glu307 lines the substrate pocket.

It belongs to the ATP:guanido phosphotransferase family.

The enzyme catalyses L-arginine + ATP = N(omega)-phospho-L-arginine + ADP + H(+). The protein is Arginine kinase of Liolophura japonica (Chiton).